Here is a 545-residue protein sequence, read N- to C-terminus: CTP synthase (545 aa).

The segment at 1–266 (MTHFIFVTGG…DDLICERFGF (266 aa)) is amidoligase domain. Residue S13 coordinates CTP. UTP is bound at residue S13. Residues 14–19 (SLGKGI) and D71 contribute to the ATP site. Mg(2+)-binding residues include D71 and E140. Residues 147–149 (DIE), 187–192 (KTKPTQ), and K223 contribute to the CTP site. Residues 187-192 (KTKPTQ) and K223 contribute to the UTP site. 239–241 (KDA) provides a ligand contact to ATP. The 252-residue stretch at 292–543 (RVAMVGKYVE…IDAAKTQHQK (252 aa)) folds into the Glutamine amidotransferase type-1 domain. Position 353 (G353) interacts with L-glutamine. The active-site Nucleophile; for glutamine hydrolysis is the C380. L-glutamine is bound by residues 381–384 (LGMQ), E404, and R471. Residues H516 and E518 contribute to the active site.

Belongs to the CTP synthase family. In terms of assembly, homotetramer.

The catalysed reaction is UTP + L-glutamine + ATP + H2O = CTP + L-glutamate + ADP + phosphate + 2 H(+). The enzyme catalyses L-glutamine + H2O = L-glutamate + NH4(+). It catalyses the reaction UTP + NH4(+) + ATP = CTP + ADP + phosphate + 2 H(+). It functions in the pathway pyrimidine metabolism; CTP biosynthesis via de novo pathway; CTP from UDP: step 2/2. Allosterically activated by GTP, when glutamine is the substrate; GTP has no effect on the reaction when ammonia is the substrate. The allosteric effector GTP functions by stabilizing the protein conformation that binds the tetrahedral intermediate(s) formed during glutamine hydrolysis. Inhibited by the product CTP, via allosteric rather than competitive inhibition. Functionally, catalyzes the ATP-dependent amination of UTP to CTP with either L-glutamine or ammonia as the source of nitrogen. Regulates intracellular CTP levels through interactions with the four ribonucleotide triphosphates. This is CTP synthase from Acinetobacter baumannii (strain AB307-0294).